The sequence spans 315 residues: Protease HtpX homolog (315 aa).

A helical membrane pass occupies residues L16 to V36. Residue H130 coordinates Zn(2+). The active site involves E131. H134 contributes to the Zn(2+) binding site. 2 helical membrane-spanning segments follow: residues I145–G165 and G172–V192. E201 contributes to the Zn(2+) binding site. The tract at residues G282 to G315 is disordered. A compositionally biased stretch (low complexity) spans I288–P303.

Belongs to the peptidase M48B family. The cofactor is Zn(2+).

The protein resides in the cell inner membrane. The protein is Protease HtpX homolog of Rhodopseudomonas palustris (strain BisB5).